A 419-amino-acid polypeptide reads, in one-letter code: Glutamate dehydrogenase (419 aa).

The active site involves K105. 219–225 (GYGNAGY) contacts NAD(+).

Belongs to the Glu/Leu/Phe/Val dehydrogenases family. Homohexamer.

It catalyses the reaction L-glutamate + NAD(+) + H2O = 2-oxoglutarate + NH4(+) + NADH + H(+). The enzyme catalyses L-glutamate + NADP(+) + H2O = 2-oxoglutarate + NH4(+) + NADPH + H(+). The polypeptide is Glutamate dehydrogenase (gdhA) (Thermococcus profundus).